The sequence spans 115 residues: Histone H2A-Bbd type 1 (115 aa).

The disordered stretch occupies residues 1–21 (MPRRRRRRGSSGAGGRGRTCS). Residues 87 to 115 (LLDMVVHNDRLLSTLFNTTTISQVAPGED) are docking domain.

It belongs to the histone H2A family. The nucleosome is a histone octamer containing two molecules each of H2A, H2B, H3 and H4 assembled in one H3-H4 heterotetramer and two H2A-H2B heterodimers. May be incorporated into a proportion of nucleosomes, replacing one or more H2A molecules. As to expression, present in mature sperm.

It localises to the nucleus. The protein resides in the chromosome. Its function is as follows. Atypical histone H2A which can replace conventional H2A in some nucleosomes and is associated with active transcription and mRNA processing. Nucleosomes wrap and compact DNA into chromatin, limiting DNA accessibility to the cellular machineries which require DNA as a template. Histones thereby play a central role in transcription regulation, DNA repair, DNA replication and chromosomal stability. Nucleosomes containing this histone are less rigid and organize less DNA than canonical nucleosomes in vivo. They are enriched in actively transcribed genes and associate with the elongating form of RNA polymerase. They associate with spliceosome components and are required for mRNA splicing. The sequence is that of Histone H2A-Bbd type 1 from Homo sapiens (Human).